The primary structure comprises 123 residues: DNA-directed RNA polymerase I subunit RPA12 (123 aa).

Zn(2+) is bound by residues cysteine 17, cysteine 20, cysteine 35, cysteine 38, cysteine 84, and cysteine 87. The segment at 17–38 (CPDCGSVLPLPGVQDAVACTRC) adopts a C4-type zinc-finger fold. The TFIIS-type zinc finger occupies 80-120 (VDRRCSRCGHEGMAYHTRQMRSADEGQTVFYTCTNCKFQEK). The Hairpin signature appears at 103–104 (DE). The Zn(2+) site is built by cysteine 112 and cysteine 115.

Belongs to the archaeal RpoM/eukaryotic RPA12/RPB9/RPC11 RNA polymerase family. As to quaternary structure, component of the RNA polymerase I (Pol I) complex consisting of at least 13 subunits.

It localises to the nucleus. It is found in the nucleolus. Functionally, core component of RNA polymerase I (Pol I), a DNA-dependent RNA polymerase which synthesizes ribosomal RNA precursors using the four ribonucleoside triphosphates as substrates. Can mediate Pol I proofreading of the nascent RNA transcript. Anchors into the Pol I active site to monitor transcription fidelity and cleave mis-incorporated 5'-ribonucleotides. The sequence is that of DNA-directed RNA polymerase I subunit RPA12 from Bos taurus (Bovine).